The sequence spans 266 residues: 3-methyl-2-oxobutanoate hydroxymethyltransferase (266 aa).

The Mg(2+) site is built by Asp45 and Asp84. Residues 45 to 46, Asp84, and Lys112 each bind 3-methyl-2-oxobutanoate; that span reads DS. Residue Glu114 coordinates Mg(2+). The active-site Proton acceptor is the Glu181.

Belongs to the PanB family. Homodecamer; pentamer of dimers. The cofactor is Mg(2+).

The protein localises to the cytoplasm. It catalyses the reaction 3-methyl-2-oxobutanoate + (6R)-5,10-methylene-5,6,7,8-tetrahydrofolate + H2O = 2-dehydropantoate + (6S)-5,6,7,8-tetrahydrofolate. It functions in the pathway cofactor biosynthesis; (R)-pantothenate biosynthesis; (R)-pantoate from 3-methyl-2-oxobutanoate: step 1/2. In terms of biological role, catalyzes the reversible reaction in which hydroxymethyl group from 5,10-methylenetetrahydrofolate is transferred onto alpha-ketoisovalerate to form ketopantoate. This Pseudomonas fluorescens (strain SBW25) protein is 3-methyl-2-oxobutanoate hydroxymethyltransferase.